The sequence spans 1001 residues: Copper-transporting ATPase RAN1 (1001 aa).

The segment at Met1–Ile21 is disordered. Topologically, residues Met1 to Arg298 are cytoplasmic. Residues Thr11–Ile21 show a composition bias toward polar residues. HMA domains are found at residues Arg56–Glu122 and Leu133–Ser199. Cu(+) contacts are provided by Cys67, Cys70, Cys144, and Cys147. An HMA 3; degenerate domain is found at Asp207–Phe273. The chain crosses the membrane as a helical span at residues Phe299 to Ala320. Over Leu321–Trp338 the chain is Extracellular. A helical transmembrane segment spans residues Leu339–Ala358. Over Ala359 to Asn365 the chain is Cytoplasmic. Residues Gly366–Val386 traverse the membrane as a helical segment. Residues Gly387–Phe403 lie on the Extracellular side of the membrane. Residues Asp404–Lys424 form a helical membrane-spanning segment. The Cytoplasmic segment spans residues Gly425–Tyr558. A helical membrane pass occupies residues Val559–Gly581. Topologically, residues Gly582–Ser602 are extracellular. The chain crosses the membrane as a helical span at residues Leu603 to Leu620. Topologically, residues Ala621–Ile931 are cytoplasmic. Asp658 serves as the catalytic 4-aspartylphosphate intermediate. Mg(2+) is bound by residues Asp877 and Asp881. Residues Arg932–Gly951 traverse the membrane as a helical segment. The Extracellular segment spans residues Val952–Pro963. A helical transmembrane segment spans residues Trp964–Leu982. The Cytoplasmic portion of the chain corresponds to Leu983–Glu1001.

Belongs to the cation transport ATPase (P-type) (TC 3.A.3) family. Type IB subfamily.

Its subcellular location is the membrane. It carries out the reaction Cu(+)(in) + ATP + H2O = Cu(+)(out) + ADP + phosphate + H(+). Involved in copper import into the cell. Essential for ethylene signaling, which requires copper. Acts by delivering copper to create functional hormone receptors. The polypeptide is Copper-transporting ATPase RAN1 (RAN1) (Arabidopsis thaliana (Mouse-ear cress)).